The following is a 194-amino-acid chain: Ion-translocating oxidoreductase complex subunit A (194 aa).

Helical transmembrane passes span 5–25 (VLIL…FLGL), 47–67 (FVLT…LVPF), 72–92 (LRTI…EMFV), 102–122 (VLGV…VALL), 135–155 (LTYG…FAAM), and 172–192 (SIGL…SGLI).

Belongs to the NqrDE/RnfAE family. The complex is composed of six subunits: RnfA, RnfB, RnfC, RnfD, RnfE and RnfG.

The protein resides in the cell inner membrane. Part of a membrane-bound complex that couples electron transfer with translocation of ions across the membrane. The protein is Ion-translocating oxidoreductase complex subunit A of Alcanivorax borkumensis (strain ATCC 700651 / DSM 11573 / NCIMB 13689 / SK2).